Consider the following 275-residue polypeptide: Putative rhamnulose-1-phosphate aldolase (275 aa).

The active site involves Glu-117. Residues His-141, His-143, and His-212 each coordinate Zn(2+).

The protein belongs to the aldolase class II family. RhaD subfamily. As to quaternary structure, homotetramer. It depends on Zn(2+) as a cofactor.

The protein resides in the cytoplasm. The enzyme catalyses L-rhamnulose 1-phosphate = (S)-lactaldehyde + dihydroxyacetone phosphate. The protein operates within carbohydrate degradation; L-rhamnose degradation; glycerone phosphate from L-rhamnose: step 3/3. Functionally, catalyzes the reversible cleavage of L-rhamnulose-1-phosphate to dihydroxyacetone phosphate (DHAP) and L-lactaldehyde. The sequence is that of Putative rhamnulose-1-phosphate aldolase from Salmonella typhi.